The chain runs to 186 residues: Small ribosomal subunit protein uS7 (186 aa).

This sequence belongs to the universal ribosomal protein uS7 family. Part of the 30S ribosomal subunit.

Functionally, one of the primary rRNA binding proteins, it binds directly to 16S rRNA where it nucleates assembly of the head domain of the 30S subunit. Is located at the subunit interface close to the decoding center. The chain is Small ribosomal subunit protein uS7 from Methanococcoides burtonii (strain DSM 6242 / NBRC 107633 / OCM 468 / ACE-M).